The chain runs to 556 residues: Arginine--tRNA ligase (556 aa).

The short motif at 132–142 (ANPTGDLHLGH) is the 'HIGH' region element.

Belongs to the class-I aminoacyl-tRNA synthetase family. As to quaternary structure, monomer.

It localises to the cytoplasm. It catalyses the reaction tRNA(Arg) + L-arginine + ATP = L-arginyl-tRNA(Arg) + AMP + diphosphate. The chain is Arginine--tRNA ligase from Listeria monocytogenes serotype 4a (strain HCC23).